We begin with the raw amino-acid sequence, 473 residues long: Photosystem II CP43 reaction center protein (473 aa).

Positions 1–14 are excised as a propeptide; that stretch reads MKTLYSLRRSYPVE. Thr15 is subject to N-acetylthreonine. Position 15 is a phosphothreonine (Thr15). Transmembrane regions (helical) follow at residues 69-93, 134-155, 178-200, 255-275, and 291-312; these read LFEV…PHLA, LIGP…KDRN, KALY…RKIT, KPFA…LSYS, and WFNN…ASQA. [CaMn4O5] cluster is bound at residue Glu367. Residues 447–471 form a helical membrane-spanning segment; the sequence is RARAAAAGFEKGIDRDFEPVLSMTP.

This sequence belongs to the PsbB/PsbC family. PsbC subfamily. As to quaternary structure, PSII is composed of 1 copy each of membrane proteins PsbA, PsbB, PsbC, PsbD, PsbE, PsbF, PsbH, PsbI, PsbJ, PsbK, PsbL, PsbM, PsbT, PsbX, PsbY, PsbZ, Psb30/Ycf12, at least 3 peripheral proteins of the oxygen-evolving complex and a large number of cofactors. It forms dimeric complexes. The cofactor is Binds multiple chlorophylls and provides some of the ligands for the Ca-4Mn-5O cluster of the oxygen-evolving complex. It may also provide a ligand for a Cl- that is required for oxygen evolution. PSII binds additional chlorophylls, carotenoids and specific lipids..

It is found in the plastid. The protein localises to the chloroplast thylakoid membrane. One of the components of the core complex of photosystem II (PSII). It binds chlorophyll and helps catalyze the primary light-induced photochemical processes of PSII. PSII is a light-driven water:plastoquinone oxidoreductase, using light energy to abstract electrons from H(2)O, generating O(2) and a proton gradient subsequently used for ATP formation. The protein is Photosystem II CP43 reaction center protein of Pinus koraiensis (Korean pine).